The following is a 160-amino-acid chain: METLKSDNKKRVLPSWMTAPGNERKVVSVKTAKRKQTAAIRVGAATRAPAKETVYCMNEAEMVDVALGILIEGRKQEKPWEQPSLVAPDKLQLSPPCSESPHTSSPGSSSEEEDSRTDSPALGLSPARGPEASNSPCSRSPEEGKEEEDELKYVREIFFS.

Met1 is modified (N-acetylmethionine). The KBM signature appears at 1–21 (METLKSDNKKRVLPSWMTAPG). The tract at residues 78–152 (KPWEQPSLVA…EGKEEEDELK (75 aa)) is disordered. Residues 99–109 (ESPHTSSPGSS) are compositionally biased toward low complexity. The XLM signature appears at 150 to 160 (ELKYVREIFFS).

Interacts (via KBM motif) with XRCC5/Ku80 and XRCC6/Ku70 heterodimer. Interacts (via XLF motif) with TRIM28/KAP1, ATM, MRE11, NBN and RAD50. Interacts with splicing factor SF3B1. Interacts with ERCC6L2; this interaction is DNA independent.

Its subcellular location is the cytoplasm. It localises to the nucleus. It is found in the chromosome. Functionally, cell-cycle-specific regulator of classical non-homologous end joining (NHEJ) of DNA double-strand break (DSB) repair, which can act both as an activator or inhibitor of NHEJ, depending on the cell cycle phase. Acts as a regulator of DNA repair pathway choice by specifically inhibiting classical NHEJ during the S and G2 phases, thereby promoting error-free repair by homologous recombination during cell cycle phases when sister chromatids are present. Preferentially protects single-stranded overhangs at break sites by inhibiting classical NHEJ, thereby creating a local environment that favors homologous recombination. Acts via interaction with XRCC5/Ku80 and XRCC6/Ku70. In contrast, acts as an activator of NHEJ during G1 phase of the cell cycle: promotes classical NHEJ in G1 phase cells via multivalent interactions that increase the affinity of DNA damage response proteins for DSB-associated chromatin. Also involved in immunoglobulin V(D)J recombination. May also act as an indirect regulator of proteasome. The chain is Cell cycle regulator of non-homologous end joining from Rattus norvegicus (Rat).